We begin with the raw amino-acid sequence, 125 residues long: Methylglyoxal synthase (125 aa).

Residues 1-125 form the MGS-like domain; sequence MTQRLRIALI…TAEKLVRALD (125 aa). Substrate contacts are provided by residues histidine 12, lysine 16, 38-41, and 59-60; these read TGTT and SG. Aspartate 65 serves as the catalytic Proton donor/acceptor. Histidine 92 lines the substrate pocket.

This sequence belongs to the methylglyoxal synthase family.

The catalysed reaction is dihydroxyacetone phosphate = methylglyoxal + phosphate. Catalyzes the formation of methylglyoxal from dihydroxyacetone phosphate. This Brucella abortus (strain S19) protein is Methylglyoxal synthase.